Reading from the N-terminus, the 829-residue chain is Sodium/hydrogen exchanger 3 (829 aa).

The first 26 residues, 1-26 (MWHRALGPGWKLLLALALTSLQGARG), serve as a signal peptide directing secretion. Over 27-46 (AEEEPSSDGSFQVVTFKWHH) the chain is Extracellular. The helical transmembrane segment at 47–69 (VQDPYIIALWILVASLAKIVFHL) threads the bilayer. Over 70 to 77 (SHKVTSIV) the chain is Cytoplasmic. A helical transmembrane segment spans residues 78–97 (PESALLIVLGLVLGGIVWAA). The Extracellular portion of the chain corresponds to 98 to 106 (DHIASFTLT). Residues 107 to 124 (PTLFFFYLLPPIVLDAGY) traverse the membrane as a helical segment. Over 125-127 (FMP) the chain is Cytoplasmic. The helical transmembrane segment at 128–163 (NRLFFGNLGTILLYAVIGTIWNAATTGLSLYGVFLS) threads the bilayer. Residues G133, G136, and T137 each contribute to the a 1,2-diacyl-sn-glycero-3-phospho-(1D-myo-inositol) site. The Extracellular segment spans residues 164-176 (GLMGELKIGLLDF). The chain crosses the membrane as a helical span at residues 177 to 198 (LLFGSLIAAVDPVAVLAVFEEV). The Cytoplasmic segment spans residues 199–200 (HV). A helical transmembrane segment spans residues 201 to 232 (NEVLFIIVFGESLLNDAVTVVLYNVFESFVTL). The Extracellular portion of the chain corresponds to 233–239 (GGDAVTG). A helical transmembrane segment spans residues 240–274 (VDCVKGIVSFFVVSLGGTLVGVIFAFLLSLVTRFT). At 275-276 (KH) the chain is on the cytoplasmic side. A helical transmembrane segment spans residues 277–299 (VRIIEPGFVFVISYLSYLTSEML). Residues 300-301 (SL) are Extracellular-facing. A helical transmembrane segment spans residues 302-318 (SSILAITFCGICCQKYV). At 319 to 325 (KANISEQ) the chain is on the cytoplasmic side. The helical transmembrane segment at 326–354 (SATTVRYTMKMLASGAETIIFMFLGISAV) threads the bilayer. Over 355-362 (NPDIWTWN) the chain is Extracellular. Residues 363 to 384 (TAFVLLTLVFISVYRAIGVVLQ) form a helical membrane-spanning segment. Over 385-397 (TWILNRYRMVQLE) the chain is Cytoplasmic. M393 serves as a coordination point for a 1,2-diacyl-sn-glycero-3-phospho-(1D-myo-inositol). Residues 398 to 421 (TIDQVVMSYGGLRGAVAYALVVLL) form a helical membrane-spanning segment. Residues 422 to 428 (DEKKVKE) lie on the Extracellular side of the membrane. Residues 429-462 (KNLFVSTTLIVVFFTVIFQGLTIKPLVQWLKVKR) form a helical membrane-spanning segment. Residues 463–829 (SEHREPKLNE…QPAAPESTHM (367 aa)) are Cytoplasmic-facing. A 1,2-diacyl-sn-glycero-3-phospho-(1D-myo-inositol) contacts are provided by Q492, I493, and H495. Residues S550 and S558 each carry the phosphoserine modification. Residues 571-585 (RPSTVEASVSYFLRE) are interaction with EZR. Residues 586–663 (NVSAVCLDMQ…RKRLESFKSA (78 aa)) are interaction with NHERF4. Positions 587–691 (VSAVCLDMQS…AQKRRNSSIP (105 aa)) are interaction with AHCYL1. Residues S588 and S603 each carry the phosphoserine modification. Residue S659 is modified to Phosphoserine; by SGK1. A compositionally biased stretch (basic residues) spans 677–687 (YKRERAQKRRN). Positions 677-696 (YKRERAQKRRNSSIPNGKLP) are disordered. A phosphoserine mark is found at S714, S805, and S808.

It belongs to the monovalent cation:proton antiporter 1 (CPA1) transporter (TC 2.A.36) family. Homodimer. Found in the forms of complex and dynamic macromolecular complexes. Binds NHERF1 and NHERF2. Interacts with CHP1; this interaction increases trafficking and activity of SLC9A3 at the plasma membrane. Interacts with CHP2 and SHANK2. Interacts with PDZK1 (via C-terminal PDZ domain). Interacts with NHERF4 and interactions decrease in response to elevated calcium ion levels. Interacts with AHCYL1; the interaction is required for SLC9A3 activity. Interacts with EZR; interaction targets SLC9A3 to the apical membrane. Interacts with SNX27 (via PDZ domains); directs SLC9A3 membrane insertion from early endosomes to the plasma membrane. In terms of processing, phosphorylated by PKA, which inhibits activity. Phosphorylation at Ser-659 by SGK1 is associated with increased abundance at the cell membrane. Phosphorylation at Ser-714 by CSNK2A1 regulates SLC9A3 activity through the formation of multiple signaling complexes.

Its subcellular location is the apical cell membrane. The protein resides in the cell membrane. It localises to the recycling endosome membrane. The protein localises to the early endosome membrane. It carries out the reaction Na(+)(in) + H(+)(out) = Na(+)(out) + H(+)(in). With respect to regulation, seems to switch between active and inactive modes in response to various stimuli. Activated directly or indirectly by membrane phosphatidylinositol (PIs). Regulated by a variety of auxiliary proteins, which facilitate the maturation, cell surface expression and function of the transporter. Inhibited specifically by the drug tenapanor. In terms of biological role, plasma membrane Na(+)/H(+) antiporter. Exchanges intracellular H(+) ions for extracellular Na(+) in 1:1 stoichiometry, playing a key role in salt and fluid absorption and pH homeostasis. Major apical Na(+)/H(+) exchanger in kidney and intestine playing an important role in renal and intestine Na(+) absorption and blood pressure regulation. In Mus musculus (Mouse), this protein is Sodium/hydrogen exchanger 3.